We begin with the raw amino-acid sequence, 374 residues long: Putative zinc finger MYND domain-containing protein R331 (374 aa).

8 residues coordinate Zn(2+): cysteine 328, cysteine 331, cysteine 341, cysteine 344, cysteine 350, cysteine 354, histidine 362, and cysteine 366. The segment at 328 to 366 adopts an MYND-type zinc-finger fold; the sequence is CFYCNKNIEKPVVCNKCFRIKYCSEKCQSEYNSYHSDDC.

This chain is Putative zinc finger MYND domain-containing protein R331, found in Acanthamoeba polyphaga (Amoeba).